We begin with the raw amino-acid sequence, 274 residues long: Rhamnulose-1-phosphate aldolase (274 aa).

Glutamate 117 is a catalytic residue. The Zn(2+) site is built by histidine 141, histidine 143, and histidine 212.

The protein belongs to the aldolase class II family. RhaD subfamily. In terms of assembly, homotetramer. Zn(2+) serves as cofactor.

It localises to the cytoplasm. The enzyme catalyses L-rhamnulose 1-phosphate = (S)-lactaldehyde + dihydroxyacetone phosphate. The protein operates within carbohydrate degradation; L-rhamnose degradation; glycerone phosphate from L-rhamnose: step 3/3. Catalyzes the reversible cleavage of L-rhamnulose-1-phosphate to dihydroxyacetone phosphate (DHAP) and L-lactaldehyde. This is Rhamnulose-1-phosphate aldolase from Escherichia coli O17:K52:H18 (strain UMN026 / ExPEC).